The following is a 515-amino-acid chain: Histidine ammonia-lyase (515 aa).

The segment at residues 145 to 147 is a cross-link (5-imidazolinone (Ala-Gly)); the sequence is ASG. A 2,3-didehydroalanine (Ser) modification is found at serine 146.

The protein belongs to the PAL/histidase family. Post-translationally, contains an active site 4-methylidene-imidazol-5-one (MIO), which is formed autocatalytically by cyclization and dehydration of residues Ala-Ser-Gly.

It localises to the cytoplasm. It catalyses the reaction L-histidine = trans-urocanate + NH4(+). It functions in the pathway amino-acid degradation; L-histidine degradation into L-glutamate; N-formimidoyl-L-glutamate from L-histidine: step 1/3. The polypeptide is Histidine ammonia-lyase (Gluconacetobacter diazotrophicus (strain ATCC 49037 / DSM 5601 / CCUG 37298 / CIP 103539 / LMG 7603 / PAl5)).